A 165-amino-acid chain; its full sequence is Fatty acid-binding protein homolog 3 (165 aa).

The first 19 residues, 1–19 (MNLYLTLFSFCFLAIMAEA), serve as a signal peptide directing secretion.

The protein belongs to the calycin superfamily. Fatty-acid binding protein (FABP) family. Expressed in presumptive hypodermal cells by the comma stage and in posterior body wall muscle cells by the two-fold stage. From L1 to adult stages, expression continues in body wall muscle cells adjacent to the pseudocoelom, while hypodermal expression is extinguished.

It localises to the secreted. May play a role in sequestering potentially toxic fatty acids and their peroxidation products, or it may be involved in the maintenance of the impermeable lipid layer of the eggshell. The sequence is that of Fatty acid-binding protein homolog 3 (lbp-3) from Caenorhabditis elegans.